The chain runs to 430 residues: CinA-like protein (430 aa).

This sequence belongs to the CinA family.

In Prochlorococcus marinus (strain NATL1A), this protein is CinA-like protein.